Consider the following 238-residue polypeptide: Accessory gene regulator A (238 aa).

A Response regulatory domain is found at 2-125 (KIFICEDDPK…LRTRIIDCLE (124 aa)). Aspartate 59 carries the 4-aspartylphosphate modification. One can recognise an HTH LytTR-type domain in the interval 143–238 (IELKRGSNSV…YASVRNVKKK (96 aa)).

It localises to the cytoplasm. Required for high-level post-exponential phase expression of a series of secreted proteins. The protein is Accessory gene regulator A (agrA) of Staphylococcus aureus (strain Mu50 / ATCC 700699).